We begin with the raw amino-acid sequence, 285 residues long: 3-methyl-2-oxobutanoate hydroxymethyltransferase 1 (285 aa).

Mg(2+) contacts are provided by Asp-49 and Asp-88. Residues 49–50, Asp-88, and Lys-118 contribute to the 3-methyl-2-oxobutanoate site; that span reads DS. Glu-120 contacts Mg(2+). The Proton acceptor role is filled by Glu-187.

It belongs to the PanB family. As to quaternary structure, homodecamer; pentamer of dimers. Mg(2+) serves as cofactor.

The protein localises to the cytoplasm. The catalysed reaction is 3-methyl-2-oxobutanoate + (6R)-5,10-methylene-5,6,7,8-tetrahydrofolate + H2O = 2-dehydropantoate + (6S)-5,6,7,8-tetrahydrofolate. It functions in the pathway cofactor biosynthesis; (R)-pantothenate biosynthesis; (R)-pantoate from 3-methyl-2-oxobutanoate: step 1/2. Catalyzes the reversible reaction in which hydroxymethyl group from 5,10-methylenetetrahydrofolate is transferred onto alpha-ketoisovalerate to form ketopantoate. The protein is 3-methyl-2-oxobutanoate hydroxymethyltransferase 1 of Burkholderia lata (strain ATCC 17760 / DSM 23089 / LMG 22485 / NCIMB 9086 / R18194 / 383).